A 214-amino-acid chain; its full sequence is Charged multivesicular body protein 2b-B (214 aa).

Residues 25–55 (QRAITRDRAALEKQEKQLEMEIKKMAKTGNK) adopt a coiled-coil conformation. A disordered region spans residues 178 to 200 (MAKAPSAAKGLPSTSAAKSKGIS). The MIT-interacting motif motif lies at 202-212 (EEIERQLKALG).

It belongs to the SNF7 family. Probable core component of the endosomal sorting required for transport complex III (ESCRT-III). ESCRT-III components are thought to multimerize to form a flat lattice on the perimeter membrane of the endosome.

Its subcellular location is the cytoplasm. It localises to the cytosol. The protein resides in the late endosome membrane. Its function is as follows. Probable core component of the endosomal sorting required for transport complex III (ESCRT-III) which is involved in multivesicular bodies (MVBs) formation and sorting of endosomal cargo proteins into MVBs. MVBs contain intraluminal vesicles (ILVs) that are generated by invagination and scission from the limiting membrane of the endosome and mostly are delivered to lysosomes enabling degradation of membrane proteins, such as stimulated growth factor receptors, lysosomal enzymes and lipids. In Xenopus laevis (African clawed frog), this protein is Charged multivesicular body protein 2b-B (chmp2b-b).